The chain runs to 530 residues: Bifunctional purine biosynthesis protein PurH (530 aa).

The 147-residue stretch at 1 to 147 folds into the MGS-like domain; it reads MPSIKRALIS…KNWKHVAIVT (147 aa).

It belongs to the PurH family.

The catalysed reaction is (6R)-10-formyltetrahydrofolate + 5-amino-1-(5-phospho-beta-D-ribosyl)imidazole-4-carboxamide = 5-formamido-1-(5-phospho-D-ribosyl)imidazole-4-carboxamide + (6S)-5,6,7,8-tetrahydrofolate. The enzyme catalyses IMP + H2O = 5-formamido-1-(5-phospho-D-ribosyl)imidazole-4-carboxamide. It functions in the pathway purine metabolism; IMP biosynthesis via de novo pathway; 5-formamido-1-(5-phospho-D-ribosyl)imidazole-4-carboxamide from 5-amino-1-(5-phospho-D-ribosyl)imidazole-4-carboxamide (10-formyl THF route): step 1/1. The protein operates within purine metabolism; IMP biosynthesis via de novo pathway; IMP from 5-formamido-1-(5-phospho-D-ribosyl)imidazole-4-carboxamide: step 1/1. The sequence is that of Bifunctional purine biosynthesis protein PurH from Neisseria meningitidis serogroup A / serotype 4A (strain DSM 15465 / Z2491).